A 308-amino-acid polypeptide reads, in one-letter code: Ava biosynthesis cluster protein O (308 aa).

It participates in secondary metabolite biosynthesis. Its function is as follows. Part of the cluster that mediates the biosynthesis of a highly modified cyclo-arginine-tryptophan dipeptide (cRW). The first step of the pathway is perfornmed by the arginine-containing cyclodipeptide synthase (RCPDS) avaA that acts as the scaffold-generating enzyme and is responsible for formation of the cyclo-Arg-Trp (cRW) diketopiperazine. AvaB then acts as a multifunctional flavoenzyme that is responsible for generating the cyclo-Arg-formylkynurenine DKP, which can be deformylated by avaC. AvaB then further catalyzes an additional N-oxidation followed by cyclization and dehydration. The next step is an N-acetylation of the guanidine group catalyzed by the arginine N-acetyltransferase avaD. The roles of the additional enzymes identified within the ava cluster still have to be determined. The protein is Ava biosynthesis cluster protein O of Aspergillus versicolor.